A 442-amino-acid chain; its full sequence is MLSDTICAIASGQINQAISIIRISGPNAFKIMEKIFLGKVGKSMEITFGWIHDDNQKIDQVLVLWFAGNKNFVGEDTVEINAHGGVLNTNLILELILKTKLARLANPGEFSLRAFLNGKIDLVKAQAINDLIHAEVKVQHQAALNQFLGKSSNFIKNLIEKIEEIIGIIEVNIDYPEYDDVEILTSDVLLPRINQLLADFDQLIKIANNSRLIYQGIKTCLVGAPNSGKSSLLNILINENKAIISEIPGTTRDVVEGNFVLDGLLFKLFDTAGIRKTTEKIEQIGIEKSYESIKKADLILHIIDASEKNRQNLDLKAKTRPDQIYLKIYNKSDLLENQEEFKDEILISAKYQKIENLLEKIKSIFAFLGKNKEFVANSFQISQIELGKLAILDAKTSLESGFGPEIAIVDLRIAWKELKTIFGRVDDENLLDSIFSKFCLGK.

Residues R22, E79, and K119 each coordinate (6S)-5-formyl-5,6,7,8-tetrahydrofolate. One can recognise a TrmE-type G domain in the interval 216-366 (GIKTCLVGAP…LLEKIKSIFA (151 aa)). N226 lines the K(+) pocket. Residues 226–231 (NSGKSS), 245–251 (SEIPGTT), and 270–273 (DTAG) each bind GTP. S230 is a Mg(2+) binding site. K(+) contacts are provided by S245, I247, and T250. T251 is a Mg(2+) binding site. Residue K442 participates in (6S)-5-formyl-5,6,7,8-tetrahydrofolate binding.

Belongs to the TRAFAC class TrmE-Era-EngA-EngB-Septin-like GTPase superfamily. TrmE GTPase family. As to quaternary structure, homodimer. Heterotetramer of two MnmE and two MnmG subunits. K(+) is required as a cofactor.

It localises to the cytoplasm. Exhibits a very high intrinsic GTPase hydrolysis rate. Involved in the addition of a carboxymethylaminomethyl (cmnm) group at the wobble position (U34) of certain tRNAs, forming tRNA-cmnm(5)s(2)U34. This is tRNA modification GTPase MnmE from Mesomycoplasma hyopneumoniae (strain 232) (Mycoplasma hyopneumoniae).